Consider the following 346-residue polypeptide: Guanine nucleotide-binding protein subunit beta-2 (346 aa).

WD repeat units lie at residues glycine 57–valine 96, leucine 99–valine 138, glycine 147–aspartate 185, glycine 188–methionine 227, glycine 230–leucine 269, glutamine 274–methionine 313, and glycine 316–leucine 346.

This sequence belongs to the WD repeat G protein beta family. G proteins are composed of 3 units, alpha, beta and gamma. Interacts with Ggammae/Guanine nucleotide-binding protein subunit gamma-e.

Functionally, guanine nucleotide-binding proteins (G proteins) are involved as modulators or transducers in various transmembrane signaling systems. The beta and gamma chains are required for the GTPase activity, for replacement of GDP by GTP, and for G protein-effector interaction. The chain is Guanine nucleotide-binding protein subunit beta-2 from Calliphora vicina (Blue blowfly).